We begin with the raw amino-acid sequence, 3649 residues long: N-(5-amino-5-carboxypentanoyl)-L-cysteinyl-D-valine synthase (3649 aa).

Residues 401 to 861 (SRDRAYVTYT…LAGHLESQGH (461 aa)) form a domain 1 (adipate-activating) region. Carrier domains lie at 783–860 (APLL…ESQG), 1859–1936 (APVS…QAAA), and 2909–2984 (APRD…LSGL). Serine 820, serine 1896, and serine 2944 each carry O-(pantetheine 4'-phosphoryl)serine. Positions 1014–1937 (HHIILDGWSL…QAEHIQAAAL (924 aa)) are domain 2 (cysteine-activating). The interval 2079–2985 (HHSCFDGWSW…FVDNVLSGLA (907 aa)) is domain 3 (valine-activating). Catalysis depends on serine 3502, which acts as the For thioesterase activity.

It belongs to the ATP-dependent AMP-binding enzyme family. The cofactor is pantetheine 4'-phosphate.

The catalysed reaction is L-2-aminoadipate + L-valine + L-cysteine + 3 ATP + H2O = N-[(5S)-5-amino-5-carboxypentanoyl]-L-cysteinyl-D-valine + 3 AMP + 3 diphosphate + 3 H(+). It functions in the pathway antibiotic biosynthesis; penicillin G biosynthesis; penicillin G from L-alpha-aminoadipate and L-cysteine and L-valine: step 1/3. Functionally, each of the constituent amino acids of the tripeptide acv are activated as aminoacyl-adenylates with peptide bonds formed through the participation of amino acid thioester intermediates. This chain is N-(5-amino-5-carboxypentanoyl)-L-cysteinyl-D-valine synthase (pcbAB), found in Amycolatopsis lactamdurans (Nocardia lactamdurans).